The primary structure comprises 182 residues: Envelope glycoprotein L (182 aa).

The N-terminal stretch at 1–39 (MRRSAARGRAVSSTQTAMGAGAAIAVWAAALIALYSSCA) is a signal peptide. One can recognise a gL alphaherpesvirus-type domain in the interval 52 to 182 (ANASDTIGRL…RPEKTAPGGV (131 aa)). Cysteines 73 and 109 form a disulfide.

Belongs to the herpesviridae glycoprotein L (gL) family. Alphaherpesvirinae gL subfamily. In terms of assembly, interacts with glycoprotein H (gH); this interaction is necessary for the correct processing and cell surface expression of gH. The heterodimer gH/gL seems to interact with gB trimers during fusion. O-glycosylated, and sialylated.

The protein localises to the virion membrane. It is found in the host cell membrane. It localises to the host Golgi apparatus. The protein resides in the host trans-Golgi network. The heterodimer glycoprotein H-glycoprotein L is required for the fusion of viral and plasma membranes leading to virus entry into the host cell. Acts as a functional inhibitor of gH and maintains gH in an inhibited form. Upon binding to host integrins, gL dissociates from gH leading to activation of the viral fusion glycoproteins gB and gH. The chain is Envelope glycoprotein L from Amazona oratrix (yellow-headed parrot).